Reading from the N-terminus, the 331-residue chain is MLGIWTLLPLVLTSVVRLLSKCVNAQVTDINSKGFELRKIVTTIETRNLEGLHHEGQFCRNPCPPGERKARDCTVNEDEPDCVPCQEGKEYTDKGHFSSKCRRCRLCDEGHGLEVEINCTRTQNTKCRCKPNFFCNSAVCEHCDPCTKCKHGIIEECTLTSNTKCKEEDSRSDLLWLCLLLLLIPPIVYVVIKKACRKHRKENQGPHESTTLNPETAINLSDVDLSKYITTIAGGMTLSQVRDFVRKNGVSEAKIDEIKNDNVQDTAEQKVQLLRNWYQLHEKKDACDTLIKGLKTAGLCTLAEKIHAVILKDITSDTENSNFGNEVQNLV.

The N-terminal stretch at 1–25 (MLGIWTLLPLVLTSVVRLLSKCVNA) is a signal peptide. The Extracellular segment spans residues 26–171 (QVTDINSKGF…NTKCKEEDSR (146 aa)). 3 TNFR-Cys repeats span residues 47-83 (RNLE…PDCV), 84-127 (PCQE…NTKC), and 128-166 (RCKP…TKCK). Cystine bridges form between cysteine 59–cysteine 73, cysteine 63–cysteine 82, cysteine 85–cysteine 101, cysteine 104–cysteine 119, cysteine 107–cysteine 127, cysteine 129–cysteine 143, cysteine 146–cysteine 157, and cysteine 149–cysteine 165. N-linked (GlcNAc...) asparagine glycosylation is present at asparagine 118. The chain crosses the membrane as a helical span at residues 172–192 (SDLLWLCLLLLLIPPIVYVVI). The Cytoplasmic portion of the chain corresponds to 193–331 (KKACRKHRKE…NFGNEVQNLV (139 aa)). The S-palmitoyl cysteine moiety is linked to residue cysteine 196. Residues 209-313 (STTLNPETAI…EKIHAVILKD (105 aa)) form an interaction with HIPK3 region. The residue at position 211 (threonine 211) is a Phosphothreonine. Serine 221 carries the post-translational modification Phosphoserine. The interaction with CALM stretch occupies residues 226-250 (SKYITTIAGGMTLSQVRDFVRKNGV). The region spanning 226 to 310 (SKYITTIAGG…TLAEKIHAVI (85 aa)) is the Death domain. Threonine 318 is modified (phosphothreonine).

In terms of assembly, binds DAXX. Interacts with HIPK3. Part of a complex containing HIPK3 and FADD. Binds RIPK1 and FAIM2. Interacts with BABAM2 and FEM1B. Interacts with FADD. Interacts directly (via DED domain) with NOL3 (via CARD domain); inhibits death-inducing signaling complex (DISC) assembly by inhibiting the increase in FAS-FADD binding induced by FAS activation. Interacts with CALM. In the absence of stimulation, interacts with BIRC2, DDX3X and GSK3B. The interaction with BIRC2 and DDX3X is further enhanced upon receptor stimulation and accompanied by DDX3X and BIRC2 cleavage. Post-translationally, palmitoylated. Palmitoylation by ZDHHC7 prevents the lysosomal degradation of FAS regulating its expression at the plasma membrane.

Its subcellular location is the cell membrane. It is found in the membrane raft. In terms of biological role, receptor for TNFSF6/FASLG. The adapter molecule FADD recruits caspase-8 to the activated receptor. The resulting death-inducing signaling complex (DISC) performs caspase-8 proteolytic activation which initiates the subsequent cascade of caspases (aspartate-specific cysteine proteases) mediating apoptosis. FAS-mediated apoptosis may have a role in the induction of peripheral tolerance, in the antigen-stimulated suicide of mature T-cells, or both. In Cercocebus atys (Sooty mangabey), this protein is Tumor necrosis factor receptor superfamily member 6 (FAS).